A 355-amino-acid chain; its full sequence is Aromatic amino acid aminotransferase (355 aa).

An N6-(pyridoxal phosphate)lysine modification is found at lysine 217.

Belongs to the class-II pyridoxal-phosphate-dependent aminotransferase family. As to quaternary structure, homodimer. The cofactor is pyridoxal 5'-phosphate.

The catalysed reaction is an aromatic L-alpha-amino acid + 2-oxoglutarate = an aromatic oxo-acid + L-glutamate. Functionally, aminotransferase that catalyzes the conversion of aromatic amino acids and 2-oxoglutarate into corresponding aromatic oxo acids and L-glutamate. This Mycolicibacterium paratuberculosis (strain ATCC BAA-968 / K-10) (Mycobacterium paratuberculosis) protein is Aromatic amino acid aminotransferase.